The chain runs to 157 residues: Arginine repressor (157 aa).

It belongs to the ArgR family.

The protein resides in the cytoplasm. Its pathway is amino-acid biosynthesis; L-arginine biosynthesis [regulation]. In terms of biological role, regulates arginine biosynthesis genes. The sequence is that of Arginine repressor from Lactobacillus delbrueckii subsp. bulgaricus (strain ATCC 11842 / DSM 20081 / BCRC 10696 / JCM 1002 / NBRC 13953 / NCIMB 11778 / NCTC 12712 / WDCM 00102 / Lb 14).